We begin with the raw amino-acid sequence, 223 residues long: N-terminal Xaa-Pro-Lys N-methyltransferase 1-B (223 aa).

S-adenosyl-L-methionine is bound by residues Gly-69, Arg-74, 91 to 93 (DVT), 119 to 120 (LQ), and Gln-135.

The protein belongs to the methyltransferase superfamily. NTM1 family.

It localises to the nucleus. It carries out the reaction N-terminal L-alanyl-L-prolyl-L-lysyl-[protein] + 3 S-adenosyl-L-methionine = N-terminal N,N,N-trimethyl-L-alanyl-L-prolyl-L-lysyl-[protein] + 3 S-adenosyl-L-homocysteine + 3 H(+). The enzyme catalyses N-terminal L-seryl-L-prolyl-L-lysyl-[protein] + 3 S-adenosyl-L-methionine = N-terminal N,N,N-trimethyl-L-seryl-L-prolyl-L-lysyl-[protein] + 3 S-adenosyl-L-homocysteine + 3 H(+). The catalysed reaction is N-terminal L-prolyl-L-prolyl-L-lysyl-[protein] + 2 S-adenosyl-L-methionine = N-terminal N,N-dimethyl-L-prolyl-L-prolyl-L-lysyl-[protein] + 2 S-adenosyl-L-homocysteine + 2 H(+). Distributive alpha-N-methyltransferase that methylates the N-terminus of target proteins containing the N-terminal motif [Ala/Gly/Pro/Ser]-Pro-Lys when the initiator Met is cleaved. Specifically catalyzes mono-, di- or tri-methylation of the exposed alpha-amino group of the Ala, Gly or Ser residue in the [Ala/Gly/Ser]-Pro-Lys motif and mono- or di-methylation of Pro in the Pro-Pro-Lys motif. Required during mitosis for normal bipolar spindle formation and chromosome segregation via its action on target proteins. This Xenopus laevis (African clawed frog) protein is N-terminal Xaa-Pro-Lys N-methyltransferase 1-B (ntmt1-b).